The sequence spans 208 residues: Small ribosomal subunit protein uS4 (208 aa).

Residues 98–166 (SRLDNVVYRM…VKEAIEASRN (69 aa)) enclose the S4 RNA-binding domain.

Belongs to the universal ribosomal protein uS4 family. Part of the 30S ribosomal subunit. Contacts protein S5. The interaction surface between S4 and S5 is involved in control of translational fidelity.

Its function is as follows. One of the primary rRNA binding proteins, it binds directly to 16S rRNA where it nucleates assembly of the body of the 30S subunit. In terms of biological role, with S5 and S12 plays an important role in translational accuracy. This chain is Small ribosomal subunit protein uS4, found in Kosmotoga olearia (strain ATCC BAA-1733 / DSM 21960 / TBF 19.5.1).